We begin with the raw amino-acid sequence, 565 residues long: NAD-dependent malic enzyme (565 aa).

Tyr-104 acts as the Proton donor in catalysis. Arg-157 contributes to the NAD(+) binding site. Lys-175 functions as the Proton acceptor in the catalytic mechanism. A divalent metal cation is bound by residues Glu-246, Asp-247, and Asp-270. 2 residues coordinate NAD(+): Asp-270 and Asn-418.

Belongs to the malic enzymes family. In terms of assembly, homotetramer. Mg(2+) is required as a cofactor. It depends on Mn(2+) as a cofactor.

The enzyme catalyses (S)-malate + NAD(+) = pyruvate + CO2 + NADH. It carries out the reaction oxaloacetate + H(+) = pyruvate + CO2. This chain is NAD-dependent malic enzyme, found in Salmonella heidelberg (strain SL476).